A 65-amino-acid chain; its full sequence is Large ribosomal subunit protein bL35 (65 aa).

The segment at M1–S46 is disordered. Basic residues predominate over residues A25 to R45.

The protein belongs to the bacterial ribosomal protein bL35 family.

The chain is Large ribosomal subunit protein bL35 from Thioalkalivibrio sulfidiphilus (strain HL-EbGR7).